An 874-amino-acid polypeptide reads, in one-letter code: Ectonucleotide pyrophosphatase/phosphodiesterase family member 3 (874 aa).

The Cytoplasmic portion of the chain corresponds to 1-11 (MDSRLALATEE). A helical; Signal-anchor for type II membrane protein membrane pass occupies residues 12 to 30 (PIKKDSLKKYKILCVVLLA). The Extracellular segment spans residues 31-874 (LLVIVSLGLG…TYLPTFETII (844 aa)). 2 SMB domains span residues 51–93 (QGSC…VKST) and 94–138 (QIWT…GESP). 13 disulfide bridges follow: Cys-54–Cys-58, Cys-54–Cys-71, Cys-58–Cys-89, Cys-69–Cys-71, Cys-69–Cys-82, Cys-75–Cys-81, Cys-82–Cys-89, Cys-98–Cys-115, Cys-103–Cys-133, Cys-113–Cys-126, Cys-119–Cys-125, Cys-144–Cys-190, and Cys-152–Cys-364. Residues 78–80 (RGD) carry the Cell attachment site motif. The phosphodiesterase stretch occupies residues 160–544 (PVILFSMDGF…HGSLNHLLKT (385 aa)). Asp-167 serves as a coordination point for Zn(2+). ATP is bound at residue Lys-204. Thr-205 is a binding site for Zn(2+). Thr-205 serves as the catalytic Nucleophile. Residue Asn-226 participates in ATP binding. An N-linked (GlcNAc...) asparagine glycan is attached at Asn-236. An ATP-binding site is contributed by Asp-275. N-linked (GlcNAc...) asparagine glycans are attached at residues Asn-279 and Asn-288. ATP is bound at residue Tyr-289. The Zn(2+) site is built by Asp-325, His-329, Asp-372, and His-373. Disulfide bonds link Cys-380-Cys-477, Cys-428-Cys-817, Cys-561-Cys-623, Cys-574-Cys-679, Cys-576-Cys-664, and Cys-786-Cys-796. The N-linked (GlcNAc...) asparagine glycan is linked to Asn-425. His-482 lines the Zn(2+) pocket. N-linked (GlcNAc...) asparagine glycans are attached at residues Asn-532, Asn-594, Asn-687, and Asn-701. Residues 581–874 (NTPGLEEQAN…TYLPTFETII (294 aa)) form a nuclease region. Positions 751, 753, 755, 757, and 759 each coordinate Ca(2+). The N-linked (GlcNAc...) asparagine glycan is linked to Asn-820.

Monomer and homodimer. It depends on Zn(2+) as a cofactor. Post-translationally, N-glycosylated. N-glycosylation is necessary for normal transport to the cell membrane, but is not the apical targeting signal. In terms of tissue distribution, detected at the tip of villi in the small intestine. Detected on basophils and mast cells (at protein level). Detected in the epithelial layer of the small intestine; expression is higher in the proximal part and lower in the distal part of the small intestine.

The protein resides in the cell membrane. The protein localises to the apical cell membrane. Its subcellular location is the secreted. It carries out the reaction a ribonucleoside 5'-triphosphate + H2O = a ribonucleoside 5'-phosphate + diphosphate + H(+). It catalyses the reaction UDP-N-acetyl-alpha-D-glucosamine + H2O = N-acetyl-alpha-D-glucosamine 1-phosphate + UMP + 2 H(+). The enzyme catalyses ATP + H2O = AMP + diphosphate + H(+). The catalysed reaction is CTP + H2O = CMP + diphosphate + H(+). It carries out the reaction GTP + H2O = GMP + diphosphate + H(+). It catalyses the reaction UTP + H2O = UMP + diphosphate + H(+). The enzyme catalyses Hydrolytically removes 5'-nucleotides successively from the 3'-hydroxy termini of 3'-hydroxy-terminated oligonucleotides.. The catalysed reaction is P(1),P(3)-bis(5'-adenosyl) triphosphate + H2O = AMP + ADP + 2 H(+). It carries out the reaction P(1),P(4)-bis(5'-adenosyl) tetraphosphate + H2O = AMP + ATP + 2 H(+). It catalyses the reaction P(1),P(5)-bis(5'-adenosyl) pentaphosphate + H2O = adenosine 5'-tetraphosphate + AMP + 2 H(+). The enzyme catalyses P(1),P(4)-bis(5'-guanosyl) tetraphosphate + H2O = GMP + GTP + 2 H(+). In terms of biological role, hydrolase that metabolizes extracellular nucleotides, including ATP, GTP, UTP and CTP. Limits mast cells and basophils response during inflammation and during the chronic phases of allergic responses by eliminating extracellular ATP, a signaling molecule activating these cells in an autocrine manner. Metabolizes extracellular ATP in the lumen of the small intestine, and thereby prevents ATP-induced apoptosis of intestinal plasmacytoid dendritic cells. Has a broad specificity and can also hydrolyze UDP-GlcNAc into UMP and GlcNAc-1-phosphate and potentially several other intracellular nucleotide sugars, including UDP-GalNAc, CMP-NeuAc, GDP-Fuc, and UDP-GlcA. Thereby, could modulate glycan biosynthesis and protein glycosylation. Can hydrolyze extracellular dinucleoside polyphosphates, including the vasoactive adenosine polyphosphates as well. In addition, displays an alkaline phosphodiesterase activity in vitro. The polypeptide is Ectonucleotide pyrophosphatase/phosphodiesterase family member 3 (Mus musculus (Mouse)).